The primary structure comprises 158 residues: Scytalone dehydratase-like protein CPUR_05428 (158 aa).

Tyr-24 and Tyr-44 together coordinate substrate. Active-site residues include His-79 and His-104.

It belongs to the scytalone dehydratase family.

It participates in pigment biosynthesis. Functionally, scytalone dehydratase-like protein; part of the ergochrome gene cluster responsible for the typical purple-black color of the ergot sclerotia. The ergochrome gene cluster produces several ergot pigments including the yellow ergochrome secalonic acid and its derivatives, as well as the red anthraquinones endocrocin and clavorubin. The pathway begins with the synthesis of atrochrysone thioester by the polyketide synthase (PKS) CPUR_05437. The atrochrysone carboxyl ACP thioesterase CPUR_05436 then breaks the thioester bond and releases the atrochrysone carboxylic acid from CPUR_05437. The atrochrysone carboxylic acid is then converted to atrochrysone which is further transformed into emodin anthrone. The next step is performed by the anthrone oxygenase CPUR_05434 that catalyzes the oxidation of emodinanthrone to emodin. Emodin is further modified to yield monodictyphenone via several steps involving CPUR_05427, CPUR_05428, CPUR_05429 and CPUR_05430. The short chain dehydrogenase/reductase CPUR_05418 then catalyzes the C-5 ketoreduction to give the xanthone skeleton of the monomeric units. Ergochromes formation requires further dimerization steps of different xanthone units, probably catalyzed by the cytochrome P450 monooxygenase CPUR_05419. CPUR_05425, CPUR_05426 and CPUR_05431 are unique to Claviceps, thus it is likely that they are involved in further modification of xanthone units or in their dimerization. The yellow ergochromes and the red anthraquinone pigments endocrocin and clavorubin are products from the same PKS derived precursors and the latter are likely shunt products in the pathway of xanthone biosynthesis. It is proposed that atrochrysone carboxylic acid released from the PKS CPUR_05437 can also be converted to endocrocin anthrone which is further oxidized into endocrocin by CPUR_05435. Endocrocin could be then modified to clavorubin, possibly by CPUR_05423 and CPUR_05431. Clavorubin is the principal anthraquinone metabolite produced by the cluster with a much higher yield compared to endocrocin. The protein is Scytalone dehydratase-like protein CPUR_05428 of Claviceps purpurea (strain 20.1) (Ergot fungus).